The sequence spans 202 residues: Coiled-coil domain-containing protein 69 (202 aa).

Positions 1-11 (MGCRQSRHSRG) are enriched in basic residues. Disordered stretches follow at residues 1–20 (MGCR…VEET) and 32–52 (GRIL…SNAQ). G2 is lipidated: N-myristoyl glycine. The segment covering 32–42 (GRILEGRHEEA) has biased composition (basic and acidic residues). The residue at position 92 (S92) is a Phosphoserine. The stretch at 112–146 (WEQELESLHHVIEMKNERIHELEKQLFLLEMLKEK) forms a coiled coil.

This sequence belongs to the CCDC69 family.

The protein localises to the cytoplasm. It is found in the cytoskeleton. Its subcellular location is the spindle. The protein resides in the midbody. Functionally, may act as a scaffold to regulate the recruitment and assembly of spindle midzone components. Required for the localization of AURKB and PLK1 to the spindle midzone. The protein is Coiled-coil domain-containing protein 69 (Ccdc69) of Mus musculus (Mouse).